Consider the following 834-residue polypeptide: Leucine--tRNA ligase (834 aa).

A 'HIGH' region motif is present at residues 36–46 (PYPSGKIHVGH). Positions 602–606 (KMSKS) match the 'KMSKS' region motif. Residue K605 coordinates ATP.

The protein belongs to the class-I aminoacyl-tRNA synthetase family.

It localises to the cytoplasm. It catalyses the reaction tRNA(Leu) + L-leucine + ATP = L-leucyl-tRNA(Leu) + AMP + diphosphate. The sequence is that of Leucine--tRNA ligase from Rickettsia canadensis (strain McKiel).